The primary structure comprises 325 residues: 4-diphosphocytidyl-2-C-methyl-D-erythritol kinase (325 aa).

The active site involves Lys-22. Residue 110 to 120 (PVAGGMAGGSA) participates in ATP binding. Asp-152 is a catalytic residue. Residues 306 to 325 (PAPGARVLEAVSTPSPGGRS) form a disordered region.

This sequence belongs to the GHMP kinase family. IspE subfamily.

It carries out the reaction 4-CDP-2-C-methyl-D-erythritol + ATP = 4-CDP-2-C-methyl-D-erythritol 2-phosphate + ADP + H(+). The protein operates within isoprenoid biosynthesis; isopentenyl diphosphate biosynthesis via DXP pathway; isopentenyl diphosphate from 1-deoxy-D-xylulose 5-phosphate: step 3/6. Functionally, catalyzes the phosphorylation of the position 2 hydroxy group of 4-diphosphocytidyl-2C-methyl-D-erythritol. In Kineococcus radiotolerans (strain ATCC BAA-149 / DSM 14245 / SRS30216), this protein is 4-diphosphocytidyl-2-C-methyl-D-erythritol kinase.